Consider the following 56-residue polypeptide: Small ribosomal subunit protein uS14 (56 aa).

Zn(2+)-binding residues include Cys21, Cys24, Cys39, and Cys42.

This sequence belongs to the universal ribosomal protein uS14 family. As to quaternary structure, component of the 40S small ribosomal subunit. Zn(2+) serves as cofactor.

It localises to the cytoplasm. The protein resides in the cytosol. The protein localises to the rough endoplasmic reticulum. This is Small ribosomal subunit protein uS14 (RpS29) from Culex quinquefasciatus (Southern house mosquito).